A 358-amino-acid chain; its full sequence is Heterogeneous nuclear ribonucleoprotein A2 homolog 2 (358 aa).

RRM domains are found at residues 9–92 (RKLF…ESAK) and 100–179 (KKLF…LSKQ). Disordered regions lie at residues 182–217 (QDVQ…FRGG) and 333–358 (YGGG…RNRY). Gly residues predominate over residues 193 to 217 (GNFGFGDSRGGGNFGSGPGGNFRGG). Residues 309–352 (QQSSSYGPMKSGGNFGGNRSMGGPYGGGNYGPGNGSGASGGGGY) are nuclear targeting sequence.

Its subcellular location is the nucleus. Its function is as follows. Forms complexes (ribonucleosomes) with at least 20 other different hnRNP and heterogeneous nuclear RNA in the nucleus. This is Heterogeneous nuclear ribonucleoprotein A2 homolog 2 from Xenopus laevis (African clawed frog).